The primary structure comprises 67 residues: Probable Sec-independent protein translocase protein TatE (67 aa).

Residues 1-21 (MEGISLAKLLIVGALIVLLFG) form a helical membrane-spanning segment. Positions 43-67 (MNDDSDATSKTASEDKNAGQAVHKE) are disordered. A compositionally biased stretch (basic and acidic residues) spans 54 to 67 (ASEDKNAGQAVHKE).

This sequence belongs to the TatA/E family. TatE subfamily.

Its subcellular location is the cell inner membrane. Its function is as follows. Part of the twin-arginine translocation (Tat) system that transports large folded proteins containing a characteristic twin-arginine motif in their signal peptide across membranes. TatE shares overlapping functions with TatA. In Erwinia tasmaniensis (strain DSM 17950 / CFBP 7177 / CIP 109463 / NCPPB 4357 / Et1/99), this protein is Probable Sec-independent protein translocase protein TatE.